Here is a 257-residue protein sequence, read N- to C-terminus: MQKVTIQEAEHLLQEIISEEDDRFQILIKDERKGVQKLISKWYKQKELAQKEKEKFLEMSKYENALREKGLTYIAGIDEVGRGPLAGPVVTAAVILPEDFYIPGLNDSKKLSEAKRERFYGEIKAKAIAIGVGIVSPQVIDEINIYQATKQAMLDAIANLSCTPEYLLIDAMKLPAPIPQTSIIKGDAKSISISAASIIAKVTRDRMMKELGEKYPAYGFEQHMGYGTKQHLEAIEAHGVLEEHRKSFAPIKDMIKK.

One can recognise an RNase H type-2 domain in the interval 72 to 257 (TYIAGIDEVG…FAPIKDMIKK (186 aa)). The a divalent metal cation site is built by Asp-78, Glu-79, and Asp-170.

This sequence belongs to the RNase HII family. Requires Mn(2+) as cofactor. Mg(2+) is required as a cofactor.

It is found in the cytoplasm. It carries out the reaction Endonucleolytic cleavage to 5'-phosphomonoester.. Functionally, endonuclease that specifically degrades the RNA of RNA-DNA hybrids. This Bacillus anthracis (strain A0248) protein is Ribonuclease HII.